Reading from the N-terminus, the 755-residue chain is Histone-lysine N-methyltransferase, H3 lysine-9 specific SUVH8 (755 aa).

Disordered regions lie at residues 62 to 98 and 111 to 243; these read YDRD…PPQT and YDRD…KMVI. 2 stretches are compositionally biased toward basic and acidic residues: residues 73–86 and 122–135; these read VHRE…EEAH and IDRE…EDAH. Residues 174–186 constitute a DNA-binding region (a.T hook); that stretch reads KRGRGRPKGSKNG. The span at 174–193 shows a compositional bias: basic residues; that stretch reads KRGRGRPKGSKNGSRKPKKP. Residues 197-207 are compositionally biased toward polar residues; it reads DNNSTDASAGP. Over residues 212–231 the composition is skewed to basic residues; it reads GKRRCGRPKGLKNRSRKPKK. A YDG domain is found at 310–448; sequence GPIPGVQVGD…FKEYRFKLLR (139 aa). In terms of domain architecture, Pre-SET spans 528-578; sequence QSLVQSYIHQNCTCILKNCGQLPYHDNILVCRKPLIYECGGSCPTRMVETG. The 143-residue stretch at 581 to 723 folds into the SET domain; that stretch reads LHLEVFKTSN…PMTELTYDYG (143 aa). Residues 591-593, aspartate 624, tyrosine 626, arginine 676, and 679-680 contribute to the S-adenosyl-L-methionine site; these read CGW and NH. Positions 682, 743, 745, and 750 each coordinate Zn(2+). One can recognise a Post-SET domain in the interval 739–755; sequence GKKICLCGSVKCRGSFG.

The protein belongs to the class V-like SAM-binding methyltransferase superfamily. Histone-lysine methyltransferase family. Suvar3-9 subfamily.

The protein resides in the nucleus. It localises to the chromosome. Its subcellular location is the centromere. The enzyme catalyses N(6)-methyl-L-lysyl(9)-[histone H3] + S-adenosyl-L-methionine = N(6),N(6)-dimethyl-L-lysyl(9)-[histone H3] + S-adenosyl-L-homocysteine + H(+). The catalysed reaction is L-lysyl(9)-[histone H3] + S-adenosyl-L-methionine = N(6)-methyl-L-lysyl(9)-[histone H3] + S-adenosyl-L-homocysteine + H(+). Functionally, histone methyltransferase. Methylates 'Lys-9' of histone H3. H3 'Lys-9' methylation represents a specific tag for epigenetic transcriptional repression. The sequence is that of Histone-lysine N-methyltransferase, H3 lysine-9 specific SUVH8 (SUVH8) from Arabidopsis thaliana (Mouse-ear cress).